A 93-amino-acid polypeptide reads, in one-letter code: uncharacterized protein (93 aa).

The protein to M.tuberculosis Rv1738.

This is an uncharacterized protein from Mycobacterium tuberculosis (strain CDC 1551 / Oshkosh).